A 574-amino-acid polypeptide reads, in one-letter code: Excitatory amino acid transporter 2 (574 aa).

At 1–44 the chain is on the cytoplasmic side; it reads MASTEGANNMPKQVEVRMHDSHLGSEEPKHRHLGLRLCDKLGKN. Phosphoserine occurs at positions 3, 21, and 25. Residue Cys-38 is the site of S-palmitoyl cysteine attachment. The helical transmembrane segment at 45–64 threads the bilayer; the sequence is LLLTLTVFGVILGAVCGGLL. Residues 65-87 are Extracellular-facing; sequence RLASPIHPDVVMLIAFPGDILMR. A helical transmembrane segment spans residues 88–108; sequence MLKMLILPLIISSLITGLSGL. Topologically, residues 109–120 are cytoplasmic; the sequence is DAKASGRLGTRA. The helical transmembrane segment at 121–142 threads the bilayer; the sequence is MVYYMSTTIIAAVLGVILVLAI. Over 143-235 the chain is Extracellular; the sequence is HPGNPKLKKQ…TKMVIKKGLE (93 aa). N-linked (GlcNAc...) asparagine glycosylation is found at Asn-206 and Asn-216. A helical membrane pass occupies residues 236-259; it reads FKDGMNVLGLIGFFIAFGIAMGKM. Residues 260–268 lie on the Cytoplasmic side of the membrane; sequence GDQAKLMVD. The helical transmembrane segment at 269–296 threads the bilayer; sequence FFNILNEIVMKLVIMIMWYSPLGIACLI. Residues 297 to 317 are Extracellular-facing; the sequence is CGKIIAIKDLEVVARQLGMYM. The helical transmembrane segment at 318–339 threads the bilayer; that stretch reads VTVIIGLIIHGGIFLPLIYFVV. The Cytoplasmic portion of the chain corresponds to 340–344; that stretch reads TRKNP. An intramembrane region (discontinuously helical) is located at residues 345–375; that stretch reads FSFFAGIFQAWITALGTASSAGTLPVTFRCL. 362–364 lines the L-aspartate pocket; it reads ASS. The Cytoplasmic portion of the chain corresponds to 376–384; sequence EENLGIDKR. A helical transmembrane segment spans residues 385-411; sequence VTRFVLPVGATINMDGTALYEAVAAIF. 3 residues coordinate Na(+): Gly-393, Thr-395, and Asn-397. Thr-401 is an L-aspartate binding site. The Extracellular portion of the chain corresponds to 412–424; it reads IAQMNGVVLDGGQ. Positions 425 to 458 form an intramembrane region, discontinuously helical; sequence IVTVSLTATLASVGAASIPSAGLVTMLLILTAVG. 442-446 contributes to the L-aspartate binding site; that stretch reads IPSAG. Topologically, residues 459 to 471 are extracellular; that stretch reads LPTEDISLLVAVD. A helical membrane pass occupies residues 472-493; the sequence is WLLDRMRTSVNVVGDSFGAGIV. The L-aspartate site is built by Asp-475 and Asn-482. Na(+)-binding residues include Asn-482 and Asp-486. Topologically, residues 494–574 are cytoplasmic; the sequence is YHLSKSELDT…VEEEPWKREK (81 aa). Residues Ser-506, Ser-521, Ser-532, and Ser-534 each carry the phosphoserine modification. Position 539 is a phosphotyrosine (Tyr-539). Phosphoserine is present on residues Ser-544, Ser-560, and Ser-564.

Belongs to the dicarboxylate/amino acid:cation symporter (DAACS) (TC 2.A.23) family. SLC1A2 subfamily. In terms of assembly, homotrimer. Isoform 3 can oligomerize with isoform 1. Interacts with AJUBA. Glycosylated. In terms of processing, palmitoylation at Cys-38 is not required for correct subcellular localization, but is important for glutamate uptake activity.

Its subcellular location is the cell membrane. The catalysed reaction is K(+)(in) + L-glutamate(out) + 3 Na(+)(out) + H(+)(out) = K(+)(out) + L-glutamate(in) + 3 Na(+)(in) + H(+)(in). It carries out the reaction K(+)(in) + L-aspartate(out) + 3 Na(+)(out) + H(+)(out) = K(+)(out) + L-aspartate(in) + 3 Na(+)(in) + H(+)(in). It catalyses the reaction D-aspartate(out) + K(+)(in) + 3 Na(+)(out) + H(+)(out) = D-aspartate(in) + K(+)(out) + 3 Na(+)(in) + H(+)(in). Sodium-dependent, high-affinity amino acid transporter that mediates the uptake of L-glutamate and also L-aspartate and D-aspartate. Functions as a symporter that transports one amino acid molecule together with two or three Na(+) ions and one proton, in parallel with the counter-transport of one K(+) ion. Mediates Cl(-) flux that is not coupled to amino acid transport; this avoids the accumulation of negative charges due to aspartate and Na(+) symport. Essential for the rapid removal of released glutamate from the synaptic cleft, and for terminating the postsynaptic action of glutamate. This Homo sapiens (Human) protein is Excitatory amino acid transporter 2.